We begin with the raw amino-acid sequence, 146 residues long: Alpha-amylase inhibitor BMAI-1 (146 aa).

Positions 1 to 14 are cleaved as a signal peptide; that stretch reads PTSVAVDQGSMVSN. The N-linked (GlcNAc...) asparagine glycan is linked to Asn125.

The protein belongs to the protease inhibitor I6 (cereal trypsin/alpha-amylase inhibitor) family. In terms of assembly, monomer. Post-translationally, five disulfide bonds, which are essential for the inhibitor activity, are probably present. Glycosylated. In terms of tissue distribution, endosperm.

The protein resides in the secreted. In terms of biological role, could be involved in insect defense mechanisms. Inhibits insect-type alpha-amylase. This chain is Alpha-amylase inhibitor BMAI-1 (IAM1), found in Hordeum vulgare (Barley).